Here is a 253-residue protein sequence, read N- to C-terminus: Ribulose bisphosphate carboxylase large chain (253 aa).

Positions 35 and 85 each coordinate substrate. The active-site Proton acceptor is the Lys87. Lys89 contacts substrate. Residues Lys113, Asp115, and Glu116 each coordinate Mg(2+). Lys113 is subject to N6-carboxylysine. The active-site Proton acceptor is His206. Substrate is bound by residues Arg207 and His239.

It belongs to the RuBisCO large chain family. Type I subfamily. As to quaternary structure, heterohexadecamer of 8 large chains and 8 small chains; disulfide-linked. The disulfide link is formed within the large subunit homodimers. Mg(2+) is required as a cofactor. Post-translationally, the disulfide bond which can form in the large chain dimeric partners within the hexadecamer appears to be associated with oxidative stress and protein turnover.

The protein localises to the plastid. It is found in the chloroplast. It carries out the reaction 2 (2R)-3-phosphoglycerate + 2 H(+) = D-ribulose 1,5-bisphosphate + CO2 + H2O. The catalysed reaction is D-ribulose 1,5-bisphosphate + O2 = 2-phosphoglycolate + (2R)-3-phosphoglycerate + 2 H(+). Its function is as follows. RuBisCO catalyzes two reactions: the carboxylation of D-ribulose 1,5-bisphosphate, the primary event in carbon dioxide fixation, as well as the oxidative fragmentation of the pentose substrate in the photorespiration process. Both reactions occur simultaneously and in competition at the same active site. The sequence is that of Ribulose bisphosphate carboxylase large chain (rbcL) from Magnolia latahensis (Apocynophyllum latahense).